Here is a 642-residue protein sequence, read N- to C-terminus: Threonine--tRNA ligase (642 aa).

Residues 1-61 (MPVITLPDGS…ENDATLAIIT (61 aa)) enclose the TGS domain. A catalytic region spans residues 243–534 (DHRKIGKQLD…LTEEFAGFFP (292 aa)). Cys-334, His-385, and His-511 together coordinate Zn(2+).

This sequence belongs to the class-II aminoacyl-tRNA synthetase family. As to quaternary structure, homodimer. Zn(2+) serves as cofactor.

The protein resides in the cytoplasm. The catalysed reaction is tRNA(Thr) + L-threonine + ATP = L-threonyl-tRNA(Thr) + AMP + diphosphate + H(+). Its function is as follows. Catalyzes the attachment of threonine to tRNA(Thr) in a two-step reaction: L-threonine is first activated by ATP to form Thr-AMP and then transferred to the acceptor end of tRNA(Thr). Also edits incorrectly charged L-seryl-tRNA(Thr). The chain is Threonine--tRNA ligase from Salmonella choleraesuis (strain SC-B67).